Reading from the N-terminus, the 246-residue chain is ATP synthase subunit a (246 aa).

Positions 1–3 (MFY) are cleaved as a propeptide — removed in mature form. 7 helical membrane passes run 20–40 (ILTLALTNYTLYLIIVVSIIF), 56–76 (WGVAIIAIYDTILNLVYSQIG), 82–102 (FFPLIFTIFNLIFAANLISMI), 112–132 (LVAIVSFSLALWIGNVILGLY), 138–158 (FFALFVPSGTPLPLVPILVLI), 176–196 (ANILSGHLLMLILGSLIVNLM), and 203–223 (FIGGIVPIVAVIAITILEVGI).

It belongs to the ATPase A chain family. As to quaternary structure, F-type ATPases have 2 components, CF(1) - the catalytic core - and CF(0) - the membrane proton channel. CF(1) has five subunits: alpha(3), beta(3), gamma(1), delta(1), epsilon(1). CF(0) has three main subunits: a, b and c.

The protein localises to the mitochondrion inner membrane. Functionally, mitochondrial membrane ATP synthase (F(1)F(0) ATP synthase or Complex V) produces ATP from ADP in the presence of a proton gradient across the membrane which is generated by electron transport complexes of the respiratory chain. F-type ATPases consist of two structural domains, F(1) - containing the extramembraneous catalytic core and F(0) - containing the membrane proton channel, linked together by a central stalk and a peripheral stalk. During catalysis, ATP synthesis in the catalytic domain of F(1) is coupled via a rotary mechanism of the central stalk subunits to proton translocation. Key component of the proton channel; it may play a direct role in the translocation of protons across the membrane. This is ATP synthase subunit a (ATP6) from Candida albicans (strain SC5314 / ATCC MYA-2876) (Yeast).